The following is a 195-amino-acid chain: Peptidyl-tRNA hydrolase (195 aa).

Tyrosine 18 contacts tRNA. The Proton acceptor role is filled by histidine 23. Positions 69, 71, and 117 each coordinate tRNA.

Belongs to the PTH family. As to quaternary structure, monomer.

It localises to the cytoplasm. It catalyses the reaction an N-acyl-L-alpha-aminoacyl-tRNA + H2O = an N-acyl-L-amino acid + a tRNA + H(+). Hydrolyzes ribosome-free peptidyl-tRNAs (with 1 or more amino acids incorporated), which drop off the ribosome during protein synthesis, or as a result of ribosome stalling. In terms of biological role, catalyzes the release of premature peptidyl moieties from peptidyl-tRNA molecules trapped in stalled 50S ribosomal subunits, and thus maintains levels of free tRNAs and 50S ribosomes. The polypeptide is Peptidyl-tRNA hydrolase (Nitrosomonas europaea (strain ATCC 19718 / CIP 103999 / KCTC 2705 / NBRC 14298)).